Here is a 372-residue protein sequence, read N- to C-terminus: Cobalt-precorrin-5B C(1)-methyltransferase (372 aa).

It belongs to the CbiD family.

It catalyses the reaction Co-precorrin-5B + S-adenosyl-L-methionine = Co-precorrin-6A + S-adenosyl-L-homocysteine. It functions in the pathway cofactor biosynthesis; adenosylcobalamin biosynthesis; cob(II)yrinate a,c-diamide from sirohydrochlorin (anaerobic route): step 6/10. Catalyzes the methylation of C-1 in cobalt-precorrin-5B to form cobalt-precorrin-6A. This is Cobalt-precorrin-5B C(1)-methyltransferase from Prochlorococcus marinus subsp. pastoris (strain CCMP1986 / NIES-2087 / MED4).